A 438-amino-acid chain; its full sequence is 3-phosphoshikimate 1-carboxyvinyltransferase (438 aa).

Residues K21, S22, and R26 each coordinate 3-phosphoshikimate. Phosphoenolpyruvate is bound at residue K21. Phosphoenolpyruvate contacts are provided by G95 and R123. 3-phosphoshikimate contacts are provided by S167, Q169, D315, and K342. Q169 contacts phosphoenolpyruvate. D315 (proton acceptor) is an active-site residue. Phosphoenolpyruvate is bound by residues R346 and R387.

Belongs to the EPSP synthase family. Monomer.

It is found in the cytoplasm. It catalyses the reaction 3-phosphoshikimate + phosphoenolpyruvate = 5-O-(1-carboxyvinyl)-3-phosphoshikimate + phosphate. Its pathway is metabolic intermediate biosynthesis; chorismate biosynthesis; chorismate from D-erythrose 4-phosphate and phosphoenolpyruvate: step 6/7. Functionally, catalyzes the transfer of the enolpyruvyl moiety of phosphoenolpyruvate (PEP) to the 5-hydroxyl of shikimate-3-phosphate (S3P) to produce enolpyruvyl shikimate-3-phosphate and inorganic phosphate. This Coxiella burnetii (strain RSA 331 / Henzerling II) protein is 3-phosphoshikimate 1-carboxyvinyltransferase.